Consider the following 331-residue polypeptide: Small ribosomal subunit protein uS2 (331 aa).

It belongs to the universal ribosomal protein uS2 family.

The polypeptide is Small ribosomal subunit protein uS2 (Rhodopseudomonas palustris (strain ATCC BAA-98 / CGA009)).